The sequence spans 147 residues: MVHFTAEEKAAIASLWGQVNVEETGGEALGRLLVVYPWTQRFFDTFGNLSSASAIMGNPRVKAHGKKVLTSFGDAVKNLDNLKGTFAKLSELHCDKLHVDPENFRLLGNVLVIVLANHFGKEFTPQVQAAWQKMVTGVANALAYKYH.

In terms of domain architecture, Globin spans 3 to 147; that stretch reads HFTAEEKAAI…VANALAYKYH (145 aa). Heme b contacts are provided by His64 and His93.

Belongs to the globin family. Heterotetramer of two alpha chains and two gamma chains in fetal hemoglobin (Hb F). In terms of tissue distribution, red blood cells.

Functionally, gamma chains make up the fetal hemoglobin F, in combination with alpha chains. The polypeptide is Hemoglobin subunit gamma (HBG) (Loxodonta africana (African elephant)).